A 168-amino-acid chain; its full sequence is Peptide deformylase (168 aa).

Fe cation-binding residues include Cys91 and His133. Residue Glu134 is part of the active site. His137 provides a ligand contact to Fe cation.

Belongs to the polypeptide deformylase family. Fe(2+) serves as cofactor.

The catalysed reaction is N-terminal N-formyl-L-methionyl-[peptide] + H2O = N-terminal L-methionyl-[peptide] + formate. In terms of biological role, removes the formyl group from the N-terminal Met of newly synthesized proteins. Requires at least a dipeptide for an efficient rate of reaction. N-terminal L-methionine is a prerequisite for activity but the enzyme has broad specificity at other positions. The sequence is that of Peptide deformylase from Endomicrobium trichonymphae.